Reading from the N-terminus, the 430-residue chain is Asparagine--tRNA ligase (430 aa).

Belongs to the class-II aminoacyl-tRNA synthetase family. As to quaternary structure, homodimer.

Its subcellular location is the cytoplasm. The enzyme catalyses tRNA(Asn) + L-asparagine + ATP = L-asparaginyl-tRNA(Asn) + AMP + diphosphate + H(+). The protein is Asparagine--tRNA ligase of Pelotomaculum thermopropionicum (strain DSM 13744 / JCM 10971 / SI).